A 401-amino-acid chain; its full sequence is Phosphoglycerate kinase (401 aa).

Substrate is bound by residues 26-28, R41, 64-67, R123, and R156; these read DLN and HLGR. ATP contacts are provided by residues K207, G298, E329, and 355–358; that span reads GGDS.

This sequence belongs to the phosphoglycerate kinase family. In terms of assembly, monomer.

The protein resides in the cytoplasm. The catalysed reaction is (2R)-3-phosphoglycerate + ATP = (2R)-3-phospho-glyceroyl phosphate + ADP. It participates in carbohydrate degradation; glycolysis; pyruvate from D-glyceraldehyde 3-phosphate: step 2/5. The polypeptide is Phosphoglycerate kinase (Bdellovibrio bacteriovorus (strain ATCC 15356 / DSM 50701 / NCIMB 9529 / HD100)).